Consider the following 400-residue polypeptide: Tryptophan synthase beta chain (400 aa).

K92 carries the post-translational modification N6-(pyridoxal phosphate)lysine.

Belongs to the TrpB family. In terms of assembly, tetramer of two alpha and two beta chains. It depends on pyridoxal 5'-phosphate as a cofactor.

It catalyses the reaction (1S,2R)-1-C-(indol-3-yl)glycerol 3-phosphate + L-serine = D-glyceraldehyde 3-phosphate + L-tryptophan + H2O. Its pathway is amino-acid biosynthesis; L-tryptophan biosynthesis; L-tryptophan from chorismate: step 5/5. In terms of biological role, the beta subunit is responsible for the synthesis of L-tryptophan from indole and L-serine. The chain is Tryptophan synthase beta chain from Chromobacterium violaceum (strain ATCC 12472 / DSM 30191 / JCM 1249 / CCUG 213 / NBRC 12614 / NCIMB 9131 / NCTC 9757 / MK).